The chain runs to 219 residues: Suppressor-of-stellate-like protein (219 aa).

The disordered stretch occupies residues 194–219; it reads SAESPPIKVESSVSKSPSWLRNVPNF. Positions 204-219 are enriched in polar residues; that stretch reads SSVSKSPSWLRNVPNF.

This sequence belongs to the casein kinase 2 subunit beta family.

This chain is Suppressor-of-stellate-like protein (Ssl), found in Drosophila melanogaster (Fruit fly).